Reading from the N-terminus, the 183-residue chain is Photosystem I assembly protein Ycf4 (183 aa).

The next 2 helical transmembrane spans lie at 21–43 (YWWASVLLLGGSSFLVVGLSSRL) and 58–80 (FIPQGLVMCFYGLVGLVVSTYLW).

The protein belongs to the Ycf4 family.

The protein resides in the plastid. It is found in the chloroplast thylakoid membrane. Functionally, seems to be required for the assembly of the photosystem I complex. This Nephroselmis olivacea (Green alga) protein is Photosystem I assembly protein Ycf4.